Reading from the N-terminus, the 146-residue chain is Large ribosomal subunit protein uL15 (146 aa).

A disordered region spans residues 1–58 (MKLNELSPPKGARTARKRKGRGPGSGLGKTAGKGHKGQKARSGGGVRPGFEGGQMPVH). 2 stretches are compositionally biased toward gly residues: residues 22–31 (GPGSGLGKTA) and 42–52 (SGGGVRPGFEG).

This sequence belongs to the universal ribosomal protein uL15 family. As to quaternary structure, part of the 50S ribosomal subunit.

Its function is as follows. Binds to the 23S rRNA. This chain is Large ribosomal subunit protein uL15, found in Desulfatibacillum aliphaticivorans.